Consider the following 862-residue polypeptide: Leucine--tRNA ligase (862 aa).

A 'HIGH' region motif is present at residues 42–52 (PYPSGKIHIGH). Positions 614-618 (KMSKS) match the 'KMSKS' region motif. An ATP-binding site is contributed by K617.

The protein belongs to the class-I aminoacyl-tRNA synthetase family.

The protein resides in the cytoplasm. It catalyses the reaction tRNA(Leu) + L-leucine + ATP = L-leucyl-tRNA(Leu) + AMP + diphosphate. This chain is Leucine--tRNA ligase, found in Syntrophus aciditrophicus (strain SB).